Reading from the N-terminus, the 269-residue chain is Fructose permease IIC component (269 aa).

One can recognise a PTS EIIC type-4 domain in the interval 1–234 (MSSLQIILLL…GALGLCLALL (234 aa)). 7 helical membrane passes run 2-22 (SSLQIILLLIIAAITGIASVL), 35-54 (TLVGLVLGDLKTGIILGGTL), 64-86 (VGLAMAPDTAIASVISTILVITA), 90-110 (IGEGIAVAVALAAAGQALTIF), 149-169 (VMIPTLIVALISVSAVQAFLG), 181-201 (IGGGIIVVVGYAMVINMMNIP), and 206-226 (FFYIGFLLAAFTDFNLVGFGA).

The protein resides in the cell membrane. Functionally, the phosphoenolpyruvate-dependent sugar phosphotransferase system (PTS), a major carbohydrate active -transport system, catalyzes the phosphorylation of incoming sugar substrates concomitant with their translocation across the cell membrane. This system is involved in fructose transport. The polypeptide is Fructose permease IIC component (levF) (Bacillus subtilis (strain 168)).